Consider the following 209-residue polypeptide: Casparian strip membrane protein 1 (209 aa).

Residues 1-46 (MEKSESTKIDVVETNKERKGKAPLLGKAPVVAAAVVHAKGGGAKRG) are Cytoplasmic-facing. Residues 47 to 67 (IAIFDLILRIAAFASALGAAV) traverse the membrane as a helical segment. The Extracellular portion of the chain corresponds to 68–96 (AMATTEETLPFFTQFFQFEASYDDLPTFT). A helical membrane pass occupies residues 97 to 117 (FFVVAMAIVVAYLVLSVPFSI). The Cytoplasmic portion of the chain corresponds to 118–129 (VCIVRPHAVVPR). Residues 130–150 (LLLIIFDTVIIALTTGAAGSS) traverse the membrane as a helical segment. Over 151–179 (AAIVYLAHNGNQDANWLAICQQFGDFCQR) the chain is Extracellular. The chain crosses the membrane as a helical span at residues 180–200 (VSGAVVAAFVTVVILIFLVVL). Residues 201–209 (SASALRRHH) lie on the Cytoplasmic side of the membrane.

Belongs to the Casparian strip membrane proteins (CASP) family. As to quaternary structure, homodimer and heterodimers.

The protein localises to the cell membrane. Functionally, regulates membrane-cell wall junctions and localized cell wall deposition. Required for establishment of the Casparian strip membrane domain (CSD) and the subsequent formation of Casparian strips, a cell wall modification of the root endodermis that determines an apoplastic barrier between the intraorganismal apoplasm and the extraorganismal apoplasm and prevents lateral diffusion. The protein is Casparian strip membrane protein 1 of Nicotiana tabacum (Common tobacco).